We begin with the raw amino-acid sequence, 366 residues long: D-alanine--D-alanine ligase (366 aa).

The ATP-grasp domain occupies 146 to 352; the sequence is KICFEHAGLQ…YTELINRLIE (207 aa). An ATP-binding site is contributed by 179–234; the sequence is EKKLRYPMFVKPANMGSSVGISKAHNRNELIEAIELALAYDRKFLIEKAINAREME. Mg(2+) contacts are provided by Asp-305, Glu-319, and Asn-321.

The protein belongs to the D-alanine--D-alanine ligase family. Mg(2+) serves as cofactor. Requires Mn(2+) as cofactor.

The protein resides in the cytoplasm. It catalyses the reaction 2 D-alanine + ATP = D-alanyl-D-alanine + ADP + phosphate + H(+). It functions in the pathway cell wall biogenesis; peptidoglycan biosynthesis. In terms of biological role, cell wall formation. In Chloroherpeton thalassium (strain ATCC 35110 / GB-78), this protein is D-alanine--D-alanine ligase.